Reading from the N-terminus, the 393-residue chain is Formate-dependent phosphoribosylglycinamide formyltransferase (393 aa).

N(1)-(5-phospho-beta-D-ribosyl)glycinamide is bound by residues 22–23 and glutamate 82; that span reads EL. Residues arginine 114, lysine 155, 160-165, 195-198, and glutamate 203 each bind ATP; these read SSGKGQ and ESFV. The 190-residue stretch at 119 to 308 folds into the ATP-grasp domain; sequence RLAAEEVGLK…EFALHVRAIL (190 aa). Glutamate 267 and glutamate 279 together coordinate Mg(2+). N(1)-(5-phospho-beta-D-ribosyl)glycinamide-binding positions include aspartate 286, lysine 356, and 363-364; that span reads RR.

This sequence belongs to the PurK/PurT family. In terms of assembly, homodimer.

The catalysed reaction is N(1)-(5-phospho-beta-D-ribosyl)glycinamide + formate + ATP = N(2)-formyl-N(1)-(5-phospho-beta-D-ribosyl)glycinamide + ADP + phosphate + H(+). The protein operates within purine metabolism; IMP biosynthesis via de novo pathway; N(2)-formyl-N(1)-(5-phospho-D-ribosyl)glycinamide from N(1)-(5-phospho-D-ribosyl)glycinamide (formate route): step 1/1. Functionally, involved in the de novo purine biosynthesis. Catalyzes the transfer of formate to 5-phospho-ribosyl-glycinamide (GAR), producing 5-phospho-ribosyl-N-formylglycinamide (FGAR). Formate is provided by PurU via hydrolysis of 10-formyl-tetrahydrofolate. The sequence is that of Formate-dependent phosphoribosylglycinamide formyltransferase from Maridesulfovibrio salexigens (strain ATCC 14822 / DSM 2638 / NCIMB 8403 / VKM B-1763) (Desulfovibrio salexigens).